A 323-amino-acid polypeptide reads, in one-letter code: Methionyl-tRNA formyltransferase (323 aa).

Position 113 to 116 (113 to 116 (SLLP)) interacts with (6S)-5,6,7,8-tetrahydrofolate.

The protein belongs to the Fmt family.

It catalyses the reaction L-methionyl-tRNA(fMet) + (6R)-10-formyltetrahydrofolate = N-formyl-L-methionyl-tRNA(fMet) + (6S)-5,6,7,8-tetrahydrofolate + H(+). Attaches a formyl group to the free amino group of methionyl-tRNA(fMet). The formyl group appears to play a dual role in the initiator identity of N-formylmethionyl-tRNA by promoting its recognition by IF2 and preventing the misappropriation of this tRNA by the elongation apparatus. This Porphyromonas gingivalis (strain ATCC BAA-308 / W83) protein is Methionyl-tRNA formyltransferase.